The primary structure comprises 262 residues: Thiazole synthase (262 aa).

Residue K97 is the Schiff-base intermediate with DXP of the active site. 1-deoxy-D-xylulose 5-phosphate-binding positions include G158, A185–G186, and N207–T208. The segment at D243–Y262 is disordered.

Belongs to the ThiG family. In terms of assembly, homotetramer. Forms heterodimers with either ThiH or ThiS.

The protein localises to the cytoplasm. It catalyses the reaction [ThiS sulfur-carrier protein]-C-terminal-Gly-aminoethanethioate + 2-iminoacetate + 1-deoxy-D-xylulose 5-phosphate = [ThiS sulfur-carrier protein]-C-terminal Gly-Gly + 2-[(2R,5Z)-2-carboxy-4-methylthiazol-5(2H)-ylidene]ethyl phosphate + 2 H2O + H(+). The protein operates within cofactor biosynthesis; thiamine diphosphate biosynthesis. Catalyzes the rearrangement of 1-deoxy-D-xylulose 5-phosphate (DXP) to produce the thiazole phosphate moiety of thiamine. Sulfur is provided by the thiocarboxylate moiety of the carrier protein ThiS. In vitro, sulfur can be provided by H(2)S. This Neisseria meningitidis serogroup A / serotype 4A (strain DSM 15465 / Z2491) protein is Thiazole synthase.